The following is an 86-amino-acid chain: MAHKKGVGSSRNGRDSNPKYLGVKIFGGQAIDAGNIIVRQRGTQFHPGAGVGLGRDHTLFALVDGKVEFSTKGPKKRRTVSVVAEA.

The protein belongs to the bacterial ribosomal protein bL27 family.

In Xanthomonas axonopodis pv. citri (strain 306), this protein is Large ribosomal subunit protein bL27.